The sequence spans 97 residues: HssA/B-like protein 47 (97 aa).

The segment at 1-33 (MTLFSSISSISNPMTSSKSSIASFGSGTSMSSN) is disordered.

The protein belongs to the hssA/B family.

This is HssA/B-like protein 47 (hssl47) from Dictyostelium discoideum (Social amoeba).